A 121-amino-acid polypeptide reads, in one-letter code: Group 1 truncated hemoglobin (121 aa).

N-acetylmethionine is present on Met1. His73 is a heme binding site.

It belongs to the truncated hemoglobin family. Group I subfamily. As to quaternary structure, monomer. The cofactor is heme.

The sequence is that of Group 1 truncated hemoglobin from Tetrahymena thermophila.